The sequence spans 141 residues: Probable mobile endonuclease E (141 aa).

The disordered stretch occupies residues 115–141; it reads KMSKSENRSAFNRRNQTQNIGGNQRKG. Residues 122–141 are compositionally biased toward polar residues; the sequence is RSAFNRRNQTQNIGGNQRKG.

This chain is Probable mobile endonuclease E (mobE), found in Escherichia coli (Bacteriophage T4).